Consider the following 284-residue polypeptide: L-ribulose-5-phosphate 3-epimerase UlaE (284 aa).

It belongs to the L-ribulose-5-phosphate 3-epimerase family.

It catalyses the reaction L-ribulose 5-phosphate = L-xylulose 5-phosphate. Its pathway is cofactor degradation; L-ascorbate degradation; D-xylulose 5-phosphate from L-ascorbate: step 3/4. Catalyzes the isomerization of L-xylulose-5-phosphate to L-ribulose-5-phosphate. Is involved in the anaerobic L-ascorbate utilization. The sequence is that of L-ribulose-5-phosphate 3-epimerase UlaE from Escherichia coli O45:K1 (strain S88 / ExPEC).